A 466-amino-acid chain; its full sequence is Signal recognition particle 54 kDa protein (466 aa).

Residues 104-111 (GLQGSGKT), 184-188 (DTAGR), and 242-245 (TKLD) contribute to the GTP site. The disordered stretch occupies residues 444 to 466 (MQQGGGGGGGGGGGLGGMGPFGD). The segment covering 446-466 (QGGGGGGGGGGGLGGMGPFGD) has biased composition (gly residues).

The protein belongs to the GTP-binding SRP family. SRP54 subfamily. In terms of assembly, part of the signal recognition particle protein translocation system, which is composed of SRP and FtsY. Archaeal SRP consists of a 7S RNA molecule of 300 nucleotides and two protein subunits: SRP54 and SRP19.

The protein localises to the cytoplasm. The catalysed reaction is GTP + H2O = GDP + phosphate + H(+). Functionally, involved in targeting and insertion of nascent membrane proteins into the cytoplasmic membrane. Binds to the hydrophobic signal sequence of the ribosome-nascent chain (RNC) as it emerges from the ribosomes. The SRP-RNC complex is then targeted to the cytoplasmic membrane where it interacts with the SRP receptor FtsY. The polypeptide is Signal recognition particle 54 kDa protein (Natronomonas pharaonis (strain ATCC 35678 / DSM 2160 / CIP 103997 / JCM 8858 / NBRC 14720 / NCIMB 2260 / Gabara) (Halobacterium pharaonis)).